We begin with the raw amino-acid sequence, 277 residues long: Putative endonuclease (277 aa).

Putative endonuclease. The polypeptide is Putative endonuclease (Escherichia coli (Enterobacteria phage T5)).